The chain runs to 300 residues: MLASTVTGALQEQGRAKVNLTLRVVGRRADGYHDLESVVAFADCADQLTLAPSPELTLTTTGPLADACGDTSDNLVLKAARLLAEAVPGLTLGAFTLEKVLPVAAGIGGGSADAAAALRLLARLNGLSLDDPRLQAVALKTGADVPVCVPSRACTMTGVGENLQPLALPVLPCVMINPRVPVATKDVFQALGLKPGDLLVGVSDVLAAPAWPKAGASIGDWVAALDQVKNDLEPPALKVQPIIGTVLDALRASNGVLLARMSGSGATCFAIYGGDADAKIAGAAIAAAHPEWWVHAGTLS.

Lys17 is a catalytic residue. 102–112 (PVAAGIGGGSA) lines the ATP pocket. Asp144 is a catalytic residue.

Belongs to the GHMP kinase family. IspE subfamily.

The enzyme catalyses 4-CDP-2-C-methyl-D-erythritol + ATP = 4-CDP-2-C-methyl-D-erythritol 2-phosphate + ADP + H(+). Its pathway is isoprenoid biosynthesis; isopentenyl diphosphate biosynthesis via DXP pathway; isopentenyl diphosphate from 1-deoxy-D-xylulose 5-phosphate: step 3/6. Catalyzes the phosphorylation of the position 2 hydroxy group of 4-diphosphocytidyl-2C-methyl-D-erythritol. The polypeptide is 4-diphosphocytidyl-2-C-methyl-D-erythritol kinase (Bradyrhizobium sp. (strain ORS 278)).